The following is a 519-amino-acid chain: GATA zinc finger domain-containing protein 8 (519 aa).

Disordered stretches follow at residues 25-182, 198-249, 273-359, and 431-453; these read YSTG…SSSG, SNIN…SNNT, SNNM…NNKQ, and DERQ…KRRE. Residues 37–156 are compositionally biased toward low complexity; the sequence is TNNSQNKTNN…SSSITSPSSN (120 aa). Polar residues predominate over residues 172–182; that stretch reads SPNNKQVSSSG. Low complexity predominate over residues 273-357; that stretch reads SNNMNINNQH…SNINNNNNNN (85 aa). A coiled-coil region spans residues 429 to 461; sequence KTDERQQKKRMESDKNAEKREKRREASRLLNNV. The GATA-type zinc finger occupies 462-487; that stretch reads CRNCKTTETPEWRKGPDGTKSLCNAC.

The chain is GATA zinc finger domain-containing protein 8 (gtaH) from Dictyostelium discoideum (Social amoeba).